We begin with the raw amino-acid sequence, 794 residues long: Lon protease (794 aa).

The Lon N-terminal domain maps to 29 to 222 (VPLLPLRGVL…TLISIIQDEQ (194 aa)). 374 to 381 (GPPGVGKT) lines the ATP pocket. The region spanning 610–791 (TDQVGMATGL…DEVLEHALVG (182 aa)) is the Lon proteolytic domain. Catalysis depends on residues S697 and K740.

The protein belongs to the peptidase S16 family. In terms of assembly, homohexamer. Organized in a ring with a central cavity.

It localises to the cytoplasm. It catalyses the reaction Hydrolysis of proteins in presence of ATP.. In terms of biological role, ATP-dependent serine protease that mediates the selective degradation of mutant and abnormal proteins as well as certain short-lived regulatory proteins. Required for cellular homeostasis and for survival from DNA damage and developmental changes induced by stress. Degrades polypeptides processively to yield small peptide fragments that are 5 to 10 amino acids long. Binds to DNA in a double-stranded, site-specific manner. The chain is Lon protease from Bacillus thuringiensis (strain Al Hakam).